The primary structure comprises 544 residues: Chaperonin GroEL 1 (544 aa).

ATP is bound by residues 29–32 (TLGP), 86–90 (DGTTT), glycine 413, 476–478 (NAA), and aspartate 492. Residues 523 to 544 (EPVKAPAGGGDMDGMGGMGGMM) form a disordered region. Over residues 529–544 (AGGGDMDGMGGMGGMM) the composition is skewed to gly residues.

It belongs to the chaperonin (HSP60) family. Forms a cylinder of 14 subunits composed of two heptameric rings stacked back-to-back. Interacts with the co-chaperonin GroES.

The protein resides in the cytoplasm. It catalyses the reaction ATP + H2O + a folded polypeptide = ADP + phosphate + an unfolded polypeptide.. In terms of biological role, together with its co-chaperonin GroES, plays an essential role in assisting protein folding. The GroEL-GroES system forms a nano-cage that allows encapsulation of the non-native substrate proteins and provides a physical environment optimized to promote and accelerate protein folding. The sequence is that of Chaperonin GroEL 1 from Cutibacterium acnes (strain DSM 16379 / KPA171202) (Propionibacterium acnes).